The sequence spans 54 residues: Large ribosomal subunit protein bL33A (54 aa).

This sequence belongs to the bacterial ribosomal protein bL33 family.

The chain is Large ribosomal subunit protein bL33A (rpmG1) from Mycobacterium bovis (strain ATCC BAA-935 / AF2122/97).